Consider the following 447-residue polypeptide: Na(+)/H(+) antiporter NhaA 2 (447 aa).

A run of 11 helical transmembrane segments spans residues 30-50 (FIHIESAAGIVLFISTLLAVL), 81-101 (LHKWVNDAGMTLFFFLIALEL), 117-137 (LLSIAAALGGMSTPPLFYLLL), 146-166 (GWGTVMATDTAFVIGCLALLG), 175-195 (IFMLSMAVVDDIGAIFVVAIG), 199-219 (AVDWLVLSYALLGFMLVRAMA), 220-240 (FLGVRSLVLFSIVGGAIWLVI), 315-335 (LLHPWVGFVVLPLFALANAGV), 350-370 (VFVGFVFGKPIGIVLFSWIAV), 383-403 (WGMVFGGGMLAGIGFTMALFI), and 415-435 (AAKLGIFIASITSALIGFLCL).

It belongs to the NhaA Na(+)/H(+) (TC 2.A.33) antiporter family.

It is found in the cell inner membrane. It carries out the reaction Na(+)(in) + 2 H(+)(out) = Na(+)(out) + 2 H(+)(in). Its function is as follows. Na(+)/H(+) antiporter that extrudes sodium in exchange for external protons. This is Na(+)/H(+) antiporter NhaA 2 from Vibrio vulnificus (strain CMCP6).